We begin with the raw amino-acid sequence, 466 residues long: MSTRTVSSSSYRRMFGGPGTASRPSSSRSYVTTSTRTYSLGSALRPSTSRSLYTSSPGGVYATRSSAVRLRSSVPGVRLLQDAVDFSLADAINTEFKNTRTNEKVELQELNDRFANYIDKVRFLEQQNKILLAELEQLKGQGKSRLGDLYEEEMRELRRQVDQLTNDKARVEVERDNLAEDIMRLREKLQEETLQREEAESTLQSFRQDVDNASLARLDLERKVESLQEEIAFLKKLHDEEIQELQAQIQEQHVQIDMDVSKPDLTAALRDVRQQYESVAAKNLQEAEEWYKSKFADLSEAANRNNDALRQAKQESNEYRRQVQSLTCEVDALKGTNESLERQMREMEENFAVEAANYQDTIGRLQDEIQNMKEEMARHLREYQDLLNVKMALDIEIATYRKLLEGEESRISLPLPNFSSLNLRETNLESLPLVDTHSKRTLLIKTVETRDGQVINETSQHHDDLE.

2 stretches are compositionally biased toward low complexity: residues 1–13 (MSTR…SYRR) and 20–31 (TASRPSSSRSYV). A disordered region spans residues 1 to 31 (MSTRTVSSSSYRRMFGGPGTASRPSSSRSYV). Position 2 is an N-acetylserine (serine 2). The segment at 2–95 (STRTVSSSSY…FSLADAINTE (94 aa)) is head. A Phosphoserine; alternate modification is found at serine 7. Serine 7 carries an O-linked (GlcNAc) serine; alternate glycan. Serine 8, serine 9, and serine 10 each carry phosphoserine. Position 20 is a phosphothreonine (threonine 20). Residues serine 25 and serine 26 each carry the phosphoserine modification. A glycan (O-linked (GlcNAc) threonine) is linked at threonine 33. Serine 34 carries an O-linked (GlcNAc) serine; alternate glycan. Position 34 is a phosphoserine; by PKC; alternate (serine 34). Phosphoserine; by CaMK2, PKA, PKC and ROCK2 is present on serine 39. Phosphoserine occurs at positions 42, 47, 49, and 51. Tyrosine 53 is subject to Phosphotyrosine. At serine 55 the chain carries Phosphoserine. Phosphoserine; by CDK5 and CDK1 is present on serine 56. Phosphotyrosine is present on tyrosine 61. Serine 66 carries the post-translational modification Phosphoserine. Serine 72 is modified (phosphoserine; by AURKB and ROCK2). 2 positions are modified to phosphoserine: serine 73 and serine 87. The tract at residues 96-131 (FKNTRTNEKVELQELNDRFANYIDKVRFLEQQNKIL) is coil 1A. Positions 96–131 (FKNTRTNEKVELQELNDRFANYIDKVRFLEQQNKIL) form a coiled coil. An IF rod domain is found at 103–411 (EKVELQELND…KLLEGEESRI (309 aa)). Lysine 104 participates in a covalent cross-link: Glycyl lysine isopeptide (Lys-Gly) (interchain with G-Cter in SUMO2). Position 117 is a phosphotyrosine (tyrosine 117). N6-acetyllysine; alternate is present on residues lysine 120, lysine 129, and lysine 139. 2 positions are modified to N6-succinyllysine; alternate: lysine 120 and lysine 129. Residues lysine 120, lysine 129, and lysine 139 each participate in a glycyl lysine isopeptide (Lys-Gly) (interchain with G-Cter in SUMO2); alternate cross-link. A linker 1 region spans residues 132-153 (LAELEQLKGQGKSRLGDLYEEE). Position 144 is a phosphoserine (serine 144). A coiled-coil region spans residues 154–245 (MRELRRQVDQ…KLHDEEIQEL (92 aa)). Residues 154 to 245 (MRELRRQVDQ…KLHDEEIQEL (92 aa)) form a coil 1B region. Lysine 168 carries the post-translational modification N6-acetyllysine. Lysine 188 carries the N6-acetyllysine; alternate modification. The residue at position 188 (lysine 188) is an N6-succinyllysine; alternate. The residue at position 214 (serine 214) is a Phosphoserine. Lysine 223 bears the N6-acetyllysine; alternate mark. Residue lysine 223 forms a Glycyl lysine isopeptide (Lys-Gly) (interchain with G-Cter in SUMO2); alternate linkage. At serine 226 the chain carries Phosphoserine. Position 235 is an N6-acetyllysine (lysine 235). Residues 246–268 (QAQIQEQHVQIDMDVSKPDLTAA) are linker 12. Lysine 262 is covalently cross-linked (Glycyl lysine isopeptide (Lys-Gly) (interchain with G-Cter in SUMO2)). The interval 269-407 (LRDVRQQYES…ATYRKLLEGE (139 aa)) is coil 2. An N6-acetyllysine; alternate modification is found at lysine 294. Position 294 is an N6-succinyllysine; alternate (lysine 294). Lysine 294 participates in a covalent cross-link: Glycyl lysine isopeptide (Lys-Gly) (interchain with G-Cter in SUMO2); alternate. Residue serine 299 is modified to Phosphoserine. A coiled-coil region spans residues 303–407 (NRNNDALRQA…ATYRKLLEGE (105 aa)). Lysine 313 is covalently cross-linked (Glycyl lysine isopeptide (Lys-Gly) (interchain with G-Cter in SUMO2)). Residue serine 325 is modified to Phosphoserine. The [IL]-x-C-x-x-[DE] motif signature appears at 326–329 (LTCE). Lysine 373 is subject to N6-acetyllysine; alternate. Lysine 373 participates in a covalent cross-link: Glycyl lysine isopeptide (Lys-Gly) (interchain with G-Cter in SUMO2); alternate. Residues 408–466 (ESRISLPLPNFSSLNLRETNLESLPLVDTHSKRTLLIKTVETRDGQVINETSQHHDDLE) are tail. Phosphoserine occurs at positions 409, 412, 419, and 420. The residue at position 426 (threonine 426) is a Phosphothreonine. Serine 430 is subject to Phosphoserine. Threonine 436 carries the post-translational modification Phosphothreonine. Serine 438 carries the post-translational modification Phosphoserine. Lysine 439 is covalently cross-linked (Glycyl lysine isopeptide (Lys-Gly) (interchain with G-Cter in SUMO2)). At lysine 445 the chain carries N6-acetyllysine; alternate. Lysine 445 carries the post-translational modification N6-succinyllysine; alternate. Lysine 445 is covalently cross-linked (Glycyl lysine isopeptide (Lys-Gly) (interchain with G-Cter in SUMO2); alternate). A Glycyl lysine isopeptide (Lys-Gly) (interchain with G-Cter in SUMO1); alternate cross-link involves residue lysine 445. Threonine 446 and threonine 458 each carry phosphothreonine. Residue serine 459 is modified to Phosphoserine.

This sequence belongs to the intermediate filament family. Homomer assembled from elementary dimers. Identified in complexes that contain VIM, EZR, AHNAK, BFSP1, BFSP2, ANK2, PLEC, PRX and spectrin. Interacts with BCAS3. Interacts with LGSN. Interacts with SYNM. Interacts (via rod region) with PLEC (via CH 1 domain). Interacts with STK33. Interacts with LARP6. Interacts with RAB8B. Interacts with TOR1A; the interaction associates TOR1A with the cytoskeleton. Interacts with TOR1AIP1. Interacts with TOR1AIP1. Interacts with DIAPH1. Interacts with EPPK1; interaction is dependent of higher-order structure of intermediate filament. Interacts with the non-receptor tyrosine kinase SRMS; the interaction leads to phosphorylation of VIM. Interacts with NOD2. Interacts (via head region) with CORO1C. Interacts with HDGF. Interacts with PRKCE (via phorbol-ester/DAG-type 2 domain). Interacts with BFSP2. Interacts with PPL. Interacts with PKP1 and PKP2. Interacts with SCRIB (via PDZ domains); the interaction protects SCRIB from proteasomal degradation and facilitates SCRIB localization to intermediate filaments, the interaction is reduced by cell contact inhibition. In terms of processing, one of the most prominent phosphoproteins in various cells of mesenchymal origin. Phosphorylation is enhanced during cell division, at which time vimentin filaments are significantly reorganized. Phosphorylation by PKN1 inhibits the formation of filaments. Filament disassembly during mitosis is promoted by phosphorylation at Ser-55 as well as by nestin. Phosphorylated at Ser-56 by CDK5 during neutrophil secretion in the cytoplasm. Phosphorylated by STK33. Phosphorylated on tyrosine residues by SRMS. Post-translationally, S-nitrosylation is induced by interferon-gamma and oxidatively-modified low-densitity lipoprotein (LDL(ox)) possibly implicating the iNOS-S100A8/9 transnitrosylase complex.

It is found in the cytoplasm. The protein resides in the cytoskeleton. It localises to the nucleus matrix. Its subcellular location is the cell membrane. In terms of biological role, vimentins are class-III intermediate filaments found in various non-epithelial cells, especially mesenchymal cells. Vimentin is attached to the nucleus, endoplasmic reticulum, and mitochondria, either laterally or terminally. Plays a role in cell directional movement, orientation, cell sheet organization and Golgi complex polarization at the cell migration front. Protects SCRIB from proteasomal degradation and facilitates its localization to intermediate filaments in a cell contact-mediated manner. Functionally, involved with LARP6 in the stabilization of type I collagen mRNAs for CO1A1 and CO1A2. The chain is Vimentin (VIM) from Sus scrofa (Pig).